The chain runs to 390 residues: 3-ketosteroid-9-alpha-monooxygenase, oxygenase component (390 aa).

Positions 32–134 (WHCLGLLRDF…TLERNGQLYV (103 aa)) constitute a Rieske domain. 4 residues coordinate [2Fe-2S] cluster: Cys-73, His-75, Cys-92, and His-95. 4 residues coordinate Fe cation: Asn-181, His-187, His-192, and Asp-311.

Homotrimer. The two-component system 3-ketosteroid-9-alpha-monooxygenase is composed of an oxygenase component KshA and a reductase component KshB. Requires [2Fe-2S] cluster as cofactor. Fe cation serves as cofactor.

The enzyme catalyses androsta-1,4-diene-3,17-dione + 2 reduced [2Fe-2S]-[ferredoxin] + O2 + 2 H(+) = 9alpha-hydroxyandrosta-1,4-diene-3,17-dione + 2 oxidized [2Fe-2S]-[ferredoxin] + H2O. Its pathway is steroid metabolism; cholesterol degradation. Probably involved in the degradation of cholesterol. In vitro, catalyzes the introduction of a 9alpha-hydroxyl moiety into the ring B of 3-ketosteroid substrates such as 1,4-androstadiene-3,17-dione (ADD), 4-androstene-3,17-dione (AD), 4-androstene-17beta-ol-3-one (testosterone), 4-pregnene-3,20-dione (progesterone), 19-nor-4-androstene-3,17-dione, 1-(5alpha)-androstene-3,17-dione, 5alpha-androstane-3,17-dione, 5beta-androstane-3,17-dione, 5alpha-androstane-17beta-ol-3-one (stanolon), 11beta-hydrocortisone, 3-oxo-23,24-bisnorcholesta-4-en-22-oate (4-BNC), 23,24-bisnorcholesta-4-ene-22-oate, 3-oxo-23,24-bisnorcholesta-1,4-dien-22-oate (1,4-BNC) and 3-oxo-23,24-bisnorcholesta-1,4-dien-22-oyl-coenzyme A thioester (1,4-BNC-CoA). KshA5 has the broadest substrate range without a clear substrate preference and is active with Delta-4, Delta-1,4, 5alpha-H and 5beta-H steroids, as well as with steroids having bulky aliphatic side chains and an isopropionyl side chain at C17. In Rhodococcus rhodochrous, this protein is 3-ketosteroid-9-alpha-monooxygenase, oxygenase component.